Here is a 225-residue protein sequence, read N- to C-terminus: ATP-dependent dethiobiotin synthetase BioD (225 aa).

12-17 (EIGKTY) lines the ATP pocket. Threonine 16 is a Mg(2+) binding site. Lysine 37 is an active-site residue. Residue serine 41 coordinates substrate. ATP-binding positions include aspartate 55, 122–125 (EGVG), and 182–183 (SE). Mg(2+) contacts are provided by aspartate 55 and glutamate 122.

The protein belongs to the dethiobiotin synthetase family. In terms of assembly, homodimer. Requires Mg(2+) as cofactor.

Its subcellular location is the cytoplasm. The enzyme catalyses (7R,8S)-7,8-diammoniononanoate + CO2 + ATP = (4R,5S)-dethiobiotin + ADP + phosphate + 3 H(+). It participates in cofactor biosynthesis; biotin biosynthesis; biotin from 7,8-diaminononanoate: step 1/2. Functionally, catalyzes a mechanistically unusual reaction, the ATP-dependent insertion of CO2 between the N7 and N8 nitrogen atoms of 7,8-diaminopelargonic acid (DAPA, also called 7,8-diammoniononanoate) to form a ureido ring. This is ATP-dependent dethiobiotin synthetase BioD from Methylobacterium nodulans (strain LMG 21967 / CNCM I-2342 / ORS 2060).